We begin with the raw amino-acid sequence, 149 residues long: Protein K7 (149 aa).

Belongs to the orthopoxvirus OPG044 family. As to quaternary structure, interacts with DDX3; this interaction inhibits DDX3 and suppresses DDX3-mediated IFN-beta promoter induction. Interacts with TRAF6 and IRAK2; these interactions suppress TLR-dependent NF-KappaB activation.

Its subcellular location is the host cytoplasm. In terms of biological role, virulence factor that affects the acute immune response to infection. Bcl-2-like protein which, through its interaction with the DEAD box RNA helicase DDX3X/DDX3, prevents TBK1/IKKepsilon-mediated IRF3 activation. Contributes to virulence by binding to the host TRAF6 and IRAK2 and preventing host NF-kappa-B activation. This Cynomys gunnisoni (Gunnison's prairie dog) protein is Protein K7 (OPG044).